A 499-amino-acid polypeptide reads, in one-letter code: Ribose import ATP-binding protein RbsA 1 (499 aa).

2 consecutive ABC transporter domains span residues 5-240 and 249-494; these read LEMR…GRSI and TEPG…TAGS. ATP is bound at residue 37–44; that stretch reads GENGAGKS.

The protein belongs to the ABC transporter superfamily. Ribose importer (TC 3.A.1.2.1) family. The complex is composed of an ATP-binding protein (RbsA), two transmembrane proteins (RbsC) and a solute-binding protein (RbsB).

It is found in the cell membrane. It catalyses the reaction D-ribose(out) + ATP + H2O = D-ribose(in) + ADP + phosphate + H(+). Part of the ABC transporter complex RbsABC involved in ribose import. Responsible for energy coupling to the transport system. The protein is Ribose import ATP-binding protein RbsA 1 of Rubrobacter xylanophilus (strain DSM 9941 / JCM 11954 / NBRC 16129 / PRD-1).